Here is a 259-residue protein sequence, read N- to C-terminus: Type III pantothenate kinase (259 aa).

Asp6–Thr13 is a binding site for ATP. Position 107-110 (Gly107–Arg110) interacts with substrate. Asp109 (proton acceptor) is an active-site residue. Asp129 lines the K(+) pocket. Thr132 is an ATP binding site. Thr184 is a binding site for substrate.

The protein belongs to the type III pantothenate kinase family. In terms of assembly, homodimer. The cofactor is NH4(+). It depends on K(+) as a cofactor.

It is found in the cytoplasm. It catalyses the reaction (R)-pantothenate + ATP = (R)-4'-phosphopantothenate + ADP + H(+). It participates in cofactor biosynthesis; coenzyme A biosynthesis; CoA from (R)-pantothenate: step 1/5. Its function is as follows. Catalyzes the phosphorylation of pantothenate (Pan), the first step in CoA biosynthesis. The protein is Type III pantothenate kinase of Listeria monocytogenes serovar 1/2a (strain ATCC BAA-679 / EGD-e).